We begin with the raw amino-acid sequence, 180 residues long: Pro-glucagon (180 aa).

An N-terminal signal peptide occupies residues 1 to 20 (MKSIYFVAGLFVMLVQGSWQ). The tract at residues 26–56 (TEEKSRSFSAPQTEPLNDLDQMNEDKRHSQG) is disordered. Ser54 is modified (phosphoserine). Positions 84–89 (NKNNIA) are excised as a propeptide. A phosphoserine mark is found at Ser105 and Ser108. Arg127 carries the arginine amide modification. Positions 131-145 (DFPEEVAIVEEFRRR) are excised as a propeptide. A phosphoserine mark is found at Ser150 and Ser152.

The protein belongs to the glucagon family. Proglucagon is post-translationally processed in a tissue-specific manner in pancreatic A cells and intestinal L cells. In pancreatic A cells, the major bioactive hormone is glucagon cleaved by PCSK2/PC2. In the intestinal L cells PCSK1/PC1 liberates GLP-1, GLP-2, glicentin and oxyntomodulin. GLP-1 is further N-terminally truncated by post-translational processing in the intestinal L cells resulting in GLP-1(7-37) GLP-1-(7-36)amide. The C-terminal amidation is neither important for the metabolism of GLP-1 nor for its effects on the endocrine pancreas. Glucagon is secreted in the A cells of the islets of Langerhans. GLP-1, GLP-2, oxyntomodulin and glicentin are secreted from enteroendocrine cells throughout the gastrointestinal tract. GLP-1 and GLP-2 are also secreted in selected neurons in the brain.

The protein resides in the secreted. Its function is as follows. Plays a key role in glucose metabolism and homeostasis. Regulates blood glucose by increasing gluconeogenesis and decreasing glycolysis. A counterregulatory hormone of insulin, raises plasma glucose levels in response to insulin-induced hypoglycemia. Plays an important role in initiating and maintaining hyperglycemic conditions in diabetes. Potent stimulator of glucose-dependent insulin release. Also stimulates insulin release in response to IL6. Plays important roles on gastric motility and the suppression of plasma glucagon levels. May be involved in the suppression of satiety and stimulation of glucose disposal in peripheral tissues, independent of the actions of insulin. Has growth-promoting activities on intestinal epithelium. May also regulate the hypothalamic pituitary axis (HPA) via effects on LH, TSH, CRH, oxytocin, and vasopressin secretion. Increases islet mass through stimulation of islet neogenesis and pancreatic beta cell proliferation. Inhibits beta cell apoptosis. In terms of biological role, stimulates intestinal growth and up-regulates villus height in the small intestine, concomitant with increased crypt cell proliferation and decreased enterocyte apoptosis. The gastrointestinal tract, from the stomach to the colon is the principal target for GLP-2 action. Plays a key role in nutrient homeostasis, enhancing nutrient assimilation through enhanced gastrointestinal function, as well as increasing nutrient disposal. Stimulates intestinal glucose transport and decreases mucosal permeability. Functionally, significantly reduces food intake. Inhibits gastric emptying in humans. Suppression of gastric emptying may lead to increased gastric distension, which may contribute to satiety by causing a sensation of fullness. Its function is as follows. May modulate gastric acid secretion and the gastro-pyloro-duodenal activity. May play an important role in intestinal mucosal growth in the early period of life. The chain is Pro-glucagon (GCG) from Canis lupus familiaris (Dog).